Reading from the N-terminus, the 155-residue chain is Ribosome-binding factor A (155 aa).

Basic and acidic residues-rich tracts occupy residues 116 to 125 (ARQRDQEVAR) and 142 to 155 (SPHE…ADGW). The segment at 116 to 155 (ARQRDQEVARQAEGATPAGDANPYKTSPHEGRPESEADGW) is disordered.

It belongs to the RbfA family. In terms of assembly, monomer. Binds 30S ribosomal subunits, but not 50S ribosomal subunits or 70S ribosomes.

The protein resides in the cytoplasm. One of several proteins that assist in the late maturation steps of the functional core of the 30S ribosomal subunit. Associates with free 30S ribosomal subunits (but not with 30S subunits that are part of 70S ribosomes or polysomes). Required for efficient processing of 16S rRNA. May interact with the 5'-terminal helix region of 16S rRNA. The chain is Ribosome-binding factor A from Corynebacterium kroppenstedtii (strain DSM 44385 / JCM 11950 / CIP 105744 / CCUG 35717).